The sequence spans 215 residues: Cytochrome b-c1 complex subunit Rieske, mitochondrial (215 aa).

Residues Met-1–Leu-22 constitute a mitochondrion transit peptide. The propeptide at Ile-23 to Ser-30 is removed in mature form. Residues Lys-31–Asp-50 lie on the Mitochondrial matrix side of the membrane. A helical transmembrane segment spans residues Lys-51–Ser-80. Over Ser-81–Gly-215 the chain is Mitochondrial intermembrane. Positions Ala-90 to Lys-93 are hinge. A Rieske domain is found at Pro-123–Val-214. [2Fe-2S] cluster contacts are provided by Cys-159, His-161, Cys-178, and His-181. A disulfide bridge links Cys-164 with Cys-180.

Belongs to the Rieske iron-sulfur protein family. Component of the ubiquinol-cytochrome c oxidoreductase (cytochrome b-c1 complex, complex III, CIII), a multisubunit enzyme composed of 10 subunits. The complex is composed of 3 respiratory subunits cytochrome b (COB), cytochrome c1 (CYT1) and Rieske protein (RIP1), 2 core protein subunits COR1 and QCR2, and 5 low-molecular weight protein subunits QCR6, QCR7, QCR8, QCR9 and QCR10. The complex exists as an obligatory dimer and forms supercomplexes (SCs) in the inner mitochondrial membrane with a monomer or a dimer of cytochrome c oxidase (complex IV, CIV), resulting in 2 different assemblies (supercomplexes III(2)IV and III(2)IV(2)). RIP1 interacts with QCR10 on the intermembrane space (IMS) side, and with QCR9. The cofactor is [2Fe-2S] cluster. Post-translationally, processed by both the mitochondrial processing peptidase (MPP) and the mitochondrial intermediate protease (MIP). Initially, MPP removes 22 amino acids from the newly imported precursor in the mitochondrial matrix. This proteolytic processing is then followed by a second proteolytic cleavage by MIP, which removes an octapeptide to generate mature-sized RIP1.

It is found in the mitochondrion inner membrane. The catalysed reaction is a quinol + 2 Fe(III)-[cytochrome c](out) = a quinone + 2 Fe(II)-[cytochrome c](out) + 2 H(+)(out). In terms of biological role, component of the ubiquinol-cytochrome c oxidoreductase, a multisubunit transmembrane complex that is part of the mitochondrial electron transport chain which drives oxidative phosphorylation. The respiratory chain contains 3 multisubunit complexes succinate dehydrogenase (complex II, CII), ubiquinol-cytochrome c oxidoreductase (cytochrome b-c1 complex, complex III, CIII) and cytochrome c oxidase (complex IV, CIV), that cooperate to transfer electrons derived from NADH and succinate to molecular oxygen, creating an electrochemical gradient over the inner membrane that drives transmembrane transport and the ATP synthase. The cytochrome b-c1 complex catalyzes electron transfer from ubiquinol to cytochrome c, linking this redox reaction to translocation of protons across the mitochondrial inner membrane, with protons being carried across the membrane as hydrogens on the quinol. In the process called Q cycle, 2 protons are consumed from the matrix, 4 protons are released into the intermembrane space and 2 electrons are passed to cytochrome c. The Rieske protein is a catalytic core subunit containing a [2Fe-2S] iron-sulfur cluster. It cycles between 2 conformational states during catalysis to transfer electrons from the quinol bound in the Q(0) site in cytochrome b (COB) to cytochrome c1 (CYT1). The polypeptide is Cytochrome b-c1 complex subunit Rieske, mitochondrial (RIP1) (Saccharomyces cerevisiae (strain ATCC 204508 / S288c) (Baker's yeast)).